Here is a 193-residue protein sequence, read N- to C-terminus: L-2,4-diaminobutyric acid acetyltransferase (193 aa).

The disordered stretch occupies residues 1–22 (MSLQTLSTPTAEPVEEPRPVEA). An N-acetyltransferase domain is found at 33–185 (ALLRAPQLGD…EHAPEDLYRI (153 aa)).

This sequence belongs to the acetyltransferase family. EctA subfamily.

It carries out the reaction L-2,4-diaminobutanoate + acetyl-CoA = (2S)-4-acetamido-2-aminobutanoate + CoA + H(+). The protein operates within amine and polyamine biosynthesis; ectoine biosynthesis; L-ectoine from L-aspartate 4-semialdehyde: step 2/3. In terms of biological role, catalyzes the acetylation of L-2,4-diaminobutyrate (DABA) to gamma-N-acetyl-alpha,gamma-diaminobutyric acid (ADABA) with acetyl coenzyme A. In Nocardia farcinica (strain IFM 10152), this protein is L-2,4-diaminobutyric acid acetyltransferase (ectA).